The following is a 201-amino-acid chain: MVKEAGTKNRREKTKRIIIGISGASGTIYGIRTVQFLNELGYEIHIIISKSAEKVAQKELGINLINELKKYSSYIYNQSQIEASPSSSSFSITSKGMIIIPCSIKTLAEIANGIGSNLLSRTALNFIRTNKRLVLVIRETPLGAIELENALKLARLGVYIMPASPAFYILPKNIDDMINFIVGKALDLLGIKHDIYKRWKG.

FMN-binding positions include 23 to 25 (GAS), serine 49, 103 to 106 (SIKT), and arginine 138. Dimethylallyl phosphate-binding residues include tyrosine 168 and lysine 184.

Belongs to the UbiX/PAD1 family.

The enzyme catalyses dimethylallyl phosphate + FMNH2 = prenylated FMNH2 + phosphate. Flavin prenyltransferase that catalyzes the synthesis of the prenylated FMN cofactor (prenyl-FMN) for 4-hydroxy-3-polyprenylbenzoic acid decarboxylase UbiD. The prenyltransferase is metal-independent and links a dimethylallyl moiety from dimethylallyl monophosphate (DMAP) to the flavin N5 and C6 atoms of FMN. This chain is Flavin prenyltransferase UbiX, found in Saccharolobus solfataricus (strain ATCC 35092 / DSM 1617 / JCM 11322 / P2) (Sulfolobus solfataricus).